A 34-amino-acid polypeptide reads, in one-letter code: Calcitonin-like peptide 1 (34 aa).

Cys-2 and Cys-7 are joined by a disulfide. Residue Pro-34 is modified to Proline amide.

This chain is Calcitonin-like peptide 1, found in Odorrana schmackeri (Schmacker's frog).